The sequence spans 133 residues: MVMLDTLANALTTIYNNEVRGNKEAIIMPASKLIANVLRIMQKEGYVGEFEYIDDGRWGKIRVRLLGRINKCGAIKPRVSVSYRDLLVLPEHLRRFLPSKDVGILIISTSQGLMTHKEAIQKRVGGIAIAYVY.

This sequence belongs to the universal ribosomal protein uS8 family. In terms of assembly, part of the 30S ribosomal subunit.

Its function is as follows. One of the primary rRNA binding proteins, it binds directly to 16S rRNA central domain where it helps coordinate assembly of the platform of the 30S subunit. The polypeptide is Small ribosomal subunit protein uS8 (Ignicoccus hospitalis (strain KIN4/I / DSM 18386 / JCM 14125)).